The sequence spans 242 residues: Glucosamine-6-phosphate deaminase (242 aa).

Asp67 (proton acceptor; for enolization step) is an active-site residue. The active-site For ring-opening step is Asn136. Residue His138 is the Proton acceptor; for ring-opening step of the active site. The active-site For ring-opening step is Glu143.

Belongs to the glucosamine/galactosamine-6-phosphate isomerase family. NagB subfamily.

It catalyses the reaction alpha-D-glucosamine 6-phosphate + H2O = beta-D-fructose 6-phosphate + NH4(+). The protein operates within amino-sugar metabolism; N-acetylneuraminate degradation; D-fructose 6-phosphate from N-acetylneuraminate: step 5/5. Functionally, catalyzes the reversible isomerization-deamination of glucosamine 6-phosphate (GlcN6P) to form fructose 6-phosphate (Fru6P) and ammonium ion. This chain is Glucosamine-6-phosphate deaminase, found in Clostridium perfringens (strain ATCC 13124 / DSM 756 / JCM 1290 / NCIMB 6125 / NCTC 8237 / Type A).